The following is a 628-amino-acid chain: Methionine--tRNA ligase (628 aa).

The 'HIGH' region motif lies at 9–19 (YYVNDVPHLGH). Positions 124, 127, 142, and 145 each coordinate Zn(2+). The short motif at 294–298 (KMSKS) is the 'KMSKS' region element. Lysine 297 lines the ATP pocket. The tRNA-binding domain occupies 527–628 (DFAKIEIKVA…QLVQNGSLVG (102 aa)).

Belongs to the class-I aminoacyl-tRNA synthetase family. MetG type 2A subfamily. As to quaternary structure, homodimer. The cofactor is Zn(2+).

The protein resides in the cytoplasm. It carries out the reaction tRNA(Met) + L-methionine + ATP = L-methionyl-tRNA(Met) + AMP + diphosphate. In terms of biological role, is required not only for elongation of protein synthesis but also for the initiation of all mRNA translation through initiator tRNA(fMet) aminoacylation. The polypeptide is Methionine--tRNA ligase (metG) (Campylobacter jejuni subsp. jejuni serotype O:2 (strain ATCC 700819 / NCTC 11168)).